The primary structure comprises 917 residues: Transcription factor E2F8 (917 aa).

The segment at methionine 1 to leucine 122 is disordered. Polar residues-rich tracts occupy residues leucine 16 to lysine 27 and proline 37 to glutamate 48. Residues isoleucine 93–aspartate 103 show a composition bias toward basic and acidic residues. Acidic residues predominate over residues serine 105 to glutamate 117. The DNA-binding element occupies arginine 126–glycine 195. 6 disordered regions span residues glutamine 221–aspartate 252, proline 353–serine 386, glutamate 461–isoleucine 497, valine 556–proline 615, leucine 671–lysine 698, and glycine 813–glycine 834. Over residues glutamate 233 to aspartate 252 the composition is skewed to acidic residues. A DNA-binding region spans residues arginine 273–glycine 359. Over residues isoleucine 371–serine 386 the composition is skewed to polar residues. Composition is skewed to low complexity over residues serine 475–serine 488 and threonine 568–serine 578. Over residues glutamate 595–methionine 605 the composition is skewed to polar residues. A compositionally biased stretch (polar residues) spans valine 815–serine 830.

Belongs to the E2F/DP family. As to quaternary structure, homodimer and heterodimer: mainly forms homodimers and, to a lesser extent, heterodimers with e2f7.

It is found in the nucleus. Its function is as follows. Atypical E2F transcription factor that participates in various processes such as angiogenesis and polyploidization of specialized cells. Mainly acts as a transcription repressor that binds DNA independently of DP proteins and specifically recognizes the E2 recognition site 5'-TTTC[CG]CGC-3'. Directly represses transcription of classical E2F transcription factors such as e2f1. Acts as a regulator of S-phase by recognizing and binding the E2-related site 5'-TTCCCGCC-3' and mediating repression of G1/S-regulated genes. Acts as a promoter of sprouting angiogenesis, possibly by acting as a transcription activator and promoting expression of vegfa. The sequence is that of Transcription factor E2F8 (e2f8) from Danio rerio (Zebrafish).